Reading from the N-terminus, the 54-residue chain is Ovomucoid (54 aa).

The Kazal-like domain maps to 4–54; it reads VDCSDYPKPVCTLDYMPLCGSDNKTYSNKCNFCNAVVDSNGTITLSHFGRC. 3 disulfide bridges follow: C6/C36, C14/C33, and C22/C54. N43 carries N-linked (GlcNAc...) asparagine glycosylation.

The protein localises to the secreted. This chain is Ovomucoid, found in Coloeus monedula (Eurasian jackdaw).